The sequence spans 265 residues: Ni-sirohydrochlorin a,c-diamide reductive cyclase complex, component CfbC (265 aa).

Belongs to the NifH/BchL/ChlL family. As to quaternary structure, homodimer. The Ni-sirohydrochlorin a,c-diamide reductive cyclase complex is composed of a NifH homolog component CfbC and a NifD homolog component CfbD. [4Fe-4S] cluster is required as a cofactor.

The catalysed reaction is Ni-sirohydrochlorin a,c-diamide + 3 AH2 + ATP + H2O = 15,17(3)-seco-F430-17(3)-acid + 3 A + ADP + phosphate. Functionally, involved in the biosynthesis of the unique nickel-containing tetrapyrrole coenzyme F430, the prosthetic group of methyl-coenzyme M reductase (MCR), which plays a key role in methanogenesis and anaerobic methane oxidation. Catalyzes both the six-electron reduction of the tetrahydroporphyrin ring system and the gamma-lactamization of the c-acetamide side chain of Ni-sirohydrochlorin a,c-diamide to yield 15,17(3)-seco-F430-17(3)-acid (seco-F430), the last intermediate in the biosynthesis of the coenzyme F430. This is Ni-sirohydrochlorin a,c-diamide reductive cyclase complex, component CfbC from Methanosarcina barkeri (strain Fusaro / DSM 804).